Reading from the N-terminus, the 316-residue chain is tRNA dimethylallyltransferase (316 aa).

Position 17-24 (Gly17–Thr24) interacts with ATP. Substrate is bound at residue Thr19–Thr24. Interaction with substrate tRNA stretches follow at residues Asp42–Leu45, Gln166–Arg170, and Arg247–Arg252.

Belongs to the IPP transferase family. Monomer. Mg(2+) is required as a cofactor.

The catalysed reaction is adenosine(37) in tRNA + dimethylallyl diphosphate = N(6)-dimethylallyladenosine(37) in tRNA + diphosphate. In terms of biological role, catalyzes the transfer of a dimethylallyl group onto the adenine at position 37 in tRNAs that read codons beginning with uridine, leading to the formation of N6-(dimethylallyl)adenosine (i(6)A). The sequence is that of tRNA dimethylallyltransferase from Klebsiella pneumoniae (strain 342).